The following is a 170-amino-acid chain: Shikimate kinase (170 aa).

11-16 (LSGKST) provides a ligand contact to ATP. Residue serine 15 coordinates Mg(2+). 3 residues coordinate substrate: aspartate 33, arginine 57, and glycine 79. Residue arginine 119 participates in ATP binding. Arginine 137 provides a ligand contact to substrate.

The protein belongs to the shikimate kinase family. Monomer. Requires Mg(2+) as cofactor.

The protein resides in the cytoplasm. It carries out the reaction shikimate + ATP = 3-phosphoshikimate + ADP + H(+). It participates in metabolic intermediate biosynthesis; chorismate biosynthesis; chorismate from D-erythrose 4-phosphate and phosphoenolpyruvate: step 5/7. Catalyzes the specific phosphorylation of the 3-hydroxyl group of shikimic acid using ATP as a cosubstrate. In Clostridium botulinum (strain ATCC 19397 / Type A), this protein is Shikimate kinase.